We begin with the raw amino-acid sequence, 119 residues long: Large ribosomal subunit protein bL19 (119 aa).

The protein belongs to the bacterial ribosomal protein bL19 family.

In terms of biological role, this protein is located at the 30S-50S ribosomal subunit interface and may play a role in the structure and function of the aminoacyl-tRNA binding site. In Mycoplasma genitalium (strain ATCC 33530 / DSM 19775 / NCTC 10195 / G37) (Mycoplasmoides genitalium), this protein is Large ribosomal subunit protein bL19 (rplS).